The sequence spans 602 residues: MDSSSTKSKISHSRKTNKKSNKKHESNGKQQQQQDVDGGGGCLRSSWICKNASCRANVPKEDSFCKRCSCCVCHNFDENKDPSLWLVCEPEKSDDVEFCGLSCHIECAFREVKVGVIALGNLMKLDGCFCCYSCGKVSQILGCWKKQLVAAKEARRRDGLCYRIDLGYRLLNGTSRFSELHEIVRAAKSMLEDEVGPLDGPTARTDRGIVSRLPVAANVQELCTSAIKKAGELSANAGRDLVPAACRFHFEDIAPKQVTLRLIELPSAVEYDVKGYKLWYFKKGEMPEDDLFVDCSRTERRMVISDLEPCTEYTFRVVSYTEAGIFGHSNAMCFTKSVEILKPVDGKEKRTIDLVGNAQPSDREEKSSISSRFQIGQLGKYVQLAEAQEEGLLEAFYNVDTEKICEPPEEELPPRRPHGFDLNVVSVPDLNEEFTPPDSSGGEDNGVPLNSLAEADGGDHDDNCDDAVSNGRRKNNNDCLVISDGSGDDTGFDFLMTRKRKAISDSNDSENHECDSSSIDDTLEKCVKVIRWLEREGHIKTTFRVRFLTWFSMSSTAQEQSVVSTFVQTLEDDPGSLAGQLVDAFTDVVSTKRPNNGVMTSH.

A disordered region spans residues 1–38; the sequence is MDSSSTKSKISHSRKTNKKSNKKHESNGKQQQQQDVDG. Residues 9–22 are compositionally biased toward basic residues; the sequence is KISHSRKTNKKSNK. Residues 67–137 form a PHD-type zinc finger; sequence RCSCCVCHNF…CFCCYSCGKV (71 aa). A Nuclear localization signal motif is present at residues 144-151; it reads WKKQLVAA. Residues 242–340 enclose the Fibronectin type-III domain; that stretch reads VPAACRFHFE…AMCFTKSVEI (99 aa). The interval 430–470 is disordered; that stretch reads LNEEFTPPDSSGGEDNGVPLNSLAEADGGDHDDNCDDAVSN. Residues 502–602 are VIN3-Interacting Domain (VID); it reads AISDSNDSEN…RPNNGVMTSH (101 aa).

As to quaternary structure, interacts with VIN3 and VIL2. The heterodimer made of VIN3 and VIL1 is required for establishing the vernalization-induced epigenetic silencing of FLC. Component of the plant homeodomain / polycomb repressive complex 2 (PHD-PRC2) large complex during prolonged cold, composed of core PRC2 components (VRN2, EZA1, FIE and MSI1), and three related PHD finger proteins (VIL1, VIL2 and VIN3) that mediates histone H3 trimethylation on 'Lys-27' (H3K27me3). As to expression, accumulates in shoot and root apices, and in leaves.

The protein localises to the nucleus. The protein resides in the nucleus speckle. In terms of biological role, involved in both the vernalization and photoperiod pathways by regulating expression of the related floral repressors FLOWERING LOCUS C (FLC) and FLOWERING LOCUS M (FLM). Together with VIN3, required during vernalization for the modifications of FLC and FLM chromatin that are associated with an epigenetically silenced state (e.g. chromatin modifications, histone deacetylation, and trimethylated H3 'Lys-4' H3K4me3 and 'Lys-27' H3K27me3) and with acquisition of competence to flower. Promotes flowering in short days (SD=8 hours light/16 hours dark). Associates dynamically at FLC locus; during vernalization, binds to specific sites, but when in warm conditions, distributed along the whole locus. The sequence is that of VIN3-like protein 1 (VIL1) from Arabidopsis thaliana (Mouse-ear cress).